We begin with the raw amino-acid sequence, 268 residues long: Ribosomal RNA small subunit methyltransferase A (268 aa).

S-adenosyl-L-methionine is bound by residues Asn-23, Ile-25, Gly-50, Glu-72, Asp-97, and Asn-116.

It belongs to the class I-like SAM-binding methyltransferase superfamily. rRNA adenine N(6)-methyltransferase family. RsmA subfamily.

The protein localises to the cytoplasm. The enzyme catalyses adenosine(1518)/adenosine(1519) in 16S rRNA + 4 S-adenosyl-L-methionine = N(6)-dimethyladenosine(1518)/N(6)-dimethyladenosine(1519) in 16S rRNA + 4 S-adenosyl-L-homocysteine + 4 H(+). Functionally, specifically dimethylates two adjacent adenosines (A1518 and A1519) in the loop of a conserved hairpin near the 3'-end of 16S rRNA in the 30S particle. May play a critical role in biogenesis of 30S subunits. The chain is Ribosomal RNA small subunit methyltransferase A from Rickettsia prowazekii (strain Madrid E).